A 429-amino-acid chain; its full sequence is Serine hydroxymethyltransferase (429 aa).

(6S)-5,6,7,8-tetrahydrofolate-binding positions include L133 and 137 to 139 (GHL). K243 carries the post-translational modification N6-(pyridoxal phosphate)lysine. E259 is a (6S)-5,6,7,8-tetrahydrofolate binding site.

This sequence belongs to the SHMT family. In terms of assembly, homodimer. It depends on pyridoxal 5'-phosphate as a cofactor.

It is found in the cytoplasm. The catalysed reaction is (6R)-5,10-methylene-5,6,7,8-tetrahydrofolate + glycine + H2O = (6S)-5,6,7,8-tetrahydrofolate + L-serine. It participates in one-carbon metabolism; tetrahydrofolate interconversion. It functions in the pathway amino-acid biosynthesis; glycine biosynthesis; glycine from L-serine: step 1/1. Functionally, catalyzes the reversible interconversion of serine and glycine with tetrahydrofolate (THF) serving as the one-carbon carrier. This reaction serves as the major source of one-carbon groups required for the biosynthesis of purines, thymidylate, methionine, and other important biomolecules. Also exhibits THF-independent aldolase activity toward beta-hydroxyamino acids, producing glycine and aldehydes, via a retro-aldol mechanism. In Aster yellows witches'-broom phytoplasma (strain AYWB), this protein is Serine hydroxymethyltransferase.